The following is a 277-amino-acid chain: Phosphonoacetaldehyde hydrolase (277 aa).

The active-site Nucleophile is D20. The Mg(2+) site is built by D20 and A22. K61 (schiff-base intermediate with substrate) is an active-site residue. Mg(2+) is bound at residue D194.

Belongs to the HAD-like hydrolase superfamily. PhnX family. As to quaternary structure, homodimer. The cofactor is Mg(2+).

It catalyses the reaction phosphonoacetaldehyde + H2O = acetaldehyde + phosphate + H(+). Its function is as follows. Involved in phosphonate degradation. This is Phosphonoacetaldehyde hydrolase from Syntrophobacter fumaroxidans (strain DSM 10017 / MPOB).